The chain runs to 130 residues: Small ribosomal subunit protein uS11 (130 aa).

This sequence belongs to the universal ribosomal protein uS11 family. Part of the 30S ribosomal subunit. Interacts with proteins S7 and S18. Binds to IF-3.

Located on the platform of the 30S subunit, it bridges several disparate RNA helices of the 16S rRNA. Forms part of the Shine-Dalgarno cleft in the 70S ribosome. This chain is Small ribosomal subunit protein uS11, found in Buchnera aphidicola subsp. Schizaphis graminum (strain Sg).